The primary structure comprises 57 residues: Potassium channel toxin alpha-KTx 1.5 (57 aa).

The N-terminal stretch at 1–20 is a signal peptide; the sequence is MKISFLLLALVICSIGWSEA. Pyrrolidone carboxylic acid is present on Gln21. 3 disulfide bridges follow: Cys27–Cys48, Cys33–Cys53, and Cys37–Cys55.

It belongs to the short scorpion toxin superfamily. Potassium channel inhibitor family. Alpha-KTx 01 subfamily. As to expression, expressed by the venom gland.

It localises to the secreted. Its function is as follows. Potent blocker of both large-conductance calcium-activated potassium channels (KCa1.1/KCNMA1) and voltage-gated potassium channels (Kv1.3/KCNA3). Has also been shown to moderately inhibit Kv1.2/KCNA2 and weakly inhibit Kv1.1/KCNA1 channels, as well as 5-hydroxytryptamine 3 receptors (HTR3A). This is Potassium channel toxin alpha-KTx 1.5 from Olivierus martensii (Manchurian scorpion).